A 271-amino-acid polypeptide reads, in one-letter code: TIP41-like protein (271 aa).

Residue Lys-106 is modified to N6-acetyllysine. The interaction with PPP2CA stretch occupies residues 173-271 (RVMPSSFFLL…PVDSESAPSE (99 aa)). Phosphoserine occurs at positions 265 and 270.

This sequence belongs to the TIP41 family. In terms of assembly, interacts with PPP2CA. Interacts with PPP2CB, PPP4C and PPP6C. Interacts with IGBP1; the interaction is dependent on PPP2CA. Associates with a protein phosphatase 2A PP2A(C):IGBP1 complex. Interacts with PPP4C and PPP4R2.

Its subcellular location is the cytoplasm. Functionally, may be a allosteric regulator of serine/threonine-protein phosphatase 2A (PP2A). Inhibits catalytic activity of the PP2A(D) core complex in vitro. The PP2A(C):TIPRL complex does not show phosphatase activity. Acts as a negative regulator of serine/threonine-protein phosphatase 4 probably by inhibiting the formation of the active PPP4C:PPP4R2 complex; the function is proposed to implicate it in DNA damage response by promoting H2AX phosphorylated on Ser-140 (gamma-H2AX). May play a role in the regulation of ATM/ATR signaling pathway controlling DNA replication and repair. The chain is TIP41-like protein (Tiprl) from Rattus norvegicus (Rat).